Here is a 368-residue protein sequence, read N- to C-terminus: Peptide chain release factor 2 (368 aa).

Gln250 is subject to N5-methylglutamine.

This sequence belongs to the prokaryotic/mitochondrial release factor family. In terms of processing, methylated by PrmC. Methylation increases the termination efficiency of RF2.

The protein localises to the cytoplasm. Peptide chain release factor 2 directs the termination of translation in response to the peptide chain termination codons UGA and UAA. The polypeptide is Peptide chain release factor 2 (Rickettsia africae (strain ESF-5)).